The primary structure comprises 185 residues: ATP synthase subunit b 2 (185 aa).

Positions 1–26 are disordered; sequence MAQGHGDAKGTTAHTEAGGGHKAPFP. Residues 37–57 traverse the membrane as a helical segment; the sequence is LVSLAIAFVALYLIVSKIALP.

This sequence belongs to the ATPase B chain family. F-type ATPases have 2 components, F(1) - the catalytic core - and F(0) - the membrane proton channel. F(1) has five subunits: alpha(3), beta(3), gamma(1), delta(1), epsilon(1). F(0) has three main subunits: a(1), b(2) and c(10-14). The alpha and beta chains form an alternating ring which encloses part of the gamma chain. F(1) is attached to F(0) by a central stalk formed by the gamma and epsilon chains, while a peripheral stalk is formed by the delta and b chains.

Its subcellular location is the cell inner membrane. F(1)F(0) ATP synthase produces ATP from ADP in the presence of a proton or sodium gradient. F-type ATPases consist of two structural domains, F(1) containing the extramembraneous catalytic core and F(0) containing the membrane proton channel, linked together by a central stalk and a peripheral stalk. During catalysis, ATP synthesis in the catalytic domain of F(1) is coupled via a rotary mechanism of the central stalk subunits to proton translocation. In terms of biological role, component of the F(0) channel, it forms part of the peripheral stalk, linking F(1) to F(0). The b'-subunit is a diverged and duplicated form of b found in plants and photosynthetic bacteria. This Rhodopseudomonas palustris (strain ATCC BAA-98 / CGA009) protein is ATP synthase subunit b 2 (atpF2).